A 306-amino-acid chain; its full sequence is UDP-3-O-acyl-N-acetylglucosamine deacetylase (306 aa).

Residues H79, H238, and D242 each contribute to the Zn(2+) site. The Proton donor role is filled by H265.

This sequence belongs to the LpxC family. The cofactor is Zn(2+).

It carries out the reaction a UDP-3-O-[(3R)-3-hydroxyacyl]-N-acetyl-alpha-D-glucosamine + H2O = a UDP-3-O-[(3R)-3-hydroxyacyl]-alpha-D-glucosamine + acetate. It functions in the pathway glycolipid biosynthesis; lipid IV(A) biosynthesis; lipid IV(A) from (3R)-3-hydroxytetradecanoyl-[acyl-carrier-protein] and UDP-N-acetyl-alpha-D-glucosamine: step 2/6. Catalyzes the hydrolysis of UDP-3-O-myristoyl-N-acetylglucosamine to form UDP-3-O-myristoylglucosamine and acetate, the committed step in lipid A biosynthesis. The polypeptide is UDP-3-O-acyl-N-acetylglucosamine deacetylase (Shewanella pealeana (strain ATCC 700345 / ANG-SQ1)).